Consider the following 742-residue polypeptide: Zinc transporter ZIP6 (742 aa).

Residues 1–353 (MMTFLCTRSG…QRNTPVYIAW (353 aa)) are Extracellular-facing. N94 and N127 each carry an N-linked (GlcNAc...) asparagine glycan. 2 disordered regions span residues 148–182 (PVTTKKGDMDHSVEKSDPVPKAQPDPASGKKSQSD) and 191–210 (MNQESTTALTTPSYVTRSRR). Residues 152–165 (KKGDMDHSVEKSDP) are compositionally biased toward basic and acidic residues. Residues 192-206 (NQESTTALTTPSYVT) are compositionally biased toward polar residues. N-linked (GlcNAc...) asparagine glycosylation is found at N212, N232, and N237. A disordered region spans residues 220–260 (TQDHASFSPSQPNVTHSNHTHHDEDTPTHQHDDHDEHEHAR). Polar residues predominate over residues 222–236 (DHASFSPSQPNVTHS). A compositionally biased stretch (basic and acidic residues) spans 239 to 260 (THHDEDTPTHQHDDHDEHEHAR). 2 N-linked (GlcNAc...) asparagine glycosylation sites follow: N267 and N337. Positions 310 to 342 (EDEHSDHSHHHKHHHHHHDHQHLQHPHNHTNGR) are disordered. Residues 316 to 339 (HSHHHKHHHHHHDHQHLQHPHNHT) show a composition bias toward basic residues. The chain crosses the membrane as a helical span at residues 354–374 (LGGFLSITLISLLALVGVVLI). At 375–385 (PLMNRVCFNFL) the chain is on the cytoplasmic side. The helical transmembrane segment at 386 to 406 (LSFLVALAVGTLSGDALLHLI) threads the bilayer. Residues 407–430 (PHSQGHHHHGHSEEHAEEEDSLRP) are Extracellular-facing. A helical membrane pass occupies residues 431-451 (VWTGLTALSGVYIMFLIEHFL). Residues 452-644 (TLGKMYKDKN…LKAGMSVRQA (193 aa)) are Cytoplasmic-facing. A helical transmembrane segment spans residues 645-665 (MLYNLLSALMGYLGMIIGILI). Topologically, residues 666–671 (GHYAEN) are extracellular. Residues 672 to 692 (VATWIFALTAGLFMYVALVDM) form a helical membrane-spanning segment. Residues 693 to 710 (VPEMLHNDASEAGFSHYG) lie on the Cytoplasmic side of the membrane. The helical transmembrane segment at 711–731 (FFLLQNAGILLGFGIMLIIAV) threads the bilayer. Residues 732-742 (FEDRIQLDLGY) lie on the Extracellular side of the membrane.

Belongs to the ZIP transporter (TC 2.A.5) family. In terms of processing, cleaved on the N-terminus before locating to the plasma membrane. N-glycosylated.

Its subcellular location is the cell membrane. The enzyme catalyses Zn(2+)(in) = Zn(2+)(out). In terms of biological role, acts as a zinc-influx transporter which plays a role in zinc homeostasis and in the induction of epithelial-to-mesenchymal transition (EMT). The sequence is that of Zinc transporter ZIP6 from Danio rerio (Zebrafish).